The primary structure comprises 97 residues: Large ribosomal subunit protein bL28 (97 aa).

This sequence belongs to the bacterial ribosomal protein bL28 family.

The protein is Large ribosomal subunit protein bL28 of Brucella ovis (strain ATCC 25840 / 63/290 / NCTC 10512).